Reading from the N-terminus, the 124-residue chain is Small ribosomal subunit protein uS12 (124 aa).

Residue Asp-89 is modified to 3-methylthioaspartic acid.

It belongs to the universal ribosomal protein uS12 family. In terms of assembly, part of the 30S ribosomal subunit. Contacts proteins S8 and S17. May interact with IF1 in the 30S initiation complex.

In terms of biological role, with S4 and S5 plays an important role in translational accuracy. Its function is as follows. Interacts with and stabilizes bases of the 16S rRNA that are involved in tRNA selection in the A site and with the mRNA backbone. Located at the interface of the 30S and 50S subunits, it traverses the body of the 30S subunit contacting proteins on the other side and probably holding the rRNA structure together. The combined cluster of proteins S8, S12 and S17 appears to hold together the shoulder and platform of the 30S subunit. The polypeptide is Small ribosomal subunit protein uS12 (rpsL) (Mannheimia haemolytica (Pasteurella haemolytica)).